Consider the following 220-residue polypeptide: Phosphatidylinositol phosphate synthase (220 aa).

A run of 2 helical transmembrane segments spans residues 21–46 (LLRA…ALTL) and 52–72 (LFWG…DGAM). 29 to 32 (DTVT) is a binding site for a CDP-1,2-diacyl-sn-glycerol. Residues D66 and D69 each coordinate Mg(2+). A CDP-1,2-diacyl-sn-glycerol is bound by residues G70, R74, and T80. Mg(2+) is bound by residues D87 and D91. The active-site Proton acceptor is D91. Transmembrane regions (helical) follow at residues 93-110 (VADG…AFGW), 116-134 (VVAT…YVKA), 154-171 (LIIV…GVQW), and 177-194 (MWVL…RMHA).

Belongs to the CDP-alcohol phosphatidyltransferase class-I family. Homodimer. Mg(2+) serves as cofactor.

Its subcellular location is the cell membrane. It catalyses the reaction a CDP-1,2-diacyl-sn-glycerol + 1D-myo-inositol 3-phosphate = a 1,2-diacyl-sn-glycero-3-phospho-(1D-myo-inositol-3-phosphate) + CMP + H(+). It carries out the reaction 1,2-di-(9Z-octadecenoyl)-sn-glycero-3-cytidine-5'-diphosphate + 1D-myo-inositol 3-phosphate = 1,2-di-(9Z-octadecenoyl)-sn-glycero-3-phospho-(1D-myo-inositol-3-phosphate) + CMP + H(+). It participates in phospholipid metabolism; phosphatidylinositol phosphate biosynthesis. Functionally, catalyzes the conjugation of the 1'-hydroxyl group of D-myo-inositol-3-phosphate (also named L-myo-inositol-1-phosphate) with a lipid tail of cytidine diphosphate diacylglycerol (CDP-DAG), forming phosphatidylinositol phosphate (PIP) and CMP. PIP is a precursor of phosphatidylinositol (PI) which is an essential lipid for mycobacteria required for formation of their cell wall. The protein is Phosphatidylinositol phosphate synthase of Mycobacteroides abscessus (strain ATCC 19977 / DSM 44196 / CCUG 20993 / CIP 104536 / JCM 13569 / NCTC 13031 / TMC 1543 / L948) (Mycobacterium abscessus).